We begin with the raw amino-acid sequence, 302 residues long: Deoxyhypusine hydroxylase (302 aa).

HEAT-like PBS-type repeat units follow at residues 23–49, 54–80, 87–113, 175–201, 206–232, and 239–265; these read ERFR…AFDD, LKHE…VLKD, VRHE…YKQD, DRYR…GLKD, FRHE…NLED, and VRHE…YAED. His56, Glu57, His89, and Glu90 together coordinate Fe cation. Fe cation is bound by residues His208, Glu209, His241, and Glu242.

This sequence belongs to the deoxyhypusine hydroxylase family. Fe(2+) is required as a cofactor.

It localises to the endoplasmic reticulum membrane. It catalyses the reaction [eIF5A protein]-deoxyhypusine + AH2 + O2 = [eIF5A protein]-hypusine + A + H2O. It functions in the pathway protein modification; eIF5A hypusination. In terms of biological role, catalyzes the hydroxylation of the N(6)-(4-aminobutyl)-L-lysine intermediate to form hypusine, an essential post-translational modification only found in mature eIF-5A factor. Essential for organismal viability and plays a role in a wide number of important processes such as cell growth and proliferation, and regulates induction of autophagy and protein synthesis. Has a role in eIF-5A-mediated translational control. This chain is Deoxyhypusine hydroxylase, found in Drosophila melanogaster (Fruit fly).